We begin with the raw amino-acid sequence, 208 residues long: Protein-L-isoaspartate O-methyltransferase (208 aa).

The active site involves S59.

It belongs to the methyltransferase superfamily. L-isoaspartyl/D-aspartyl protein methyltransferase family.

Its subcellular location is the cytoplasm. It catalyses the reaction [protein]-L-isoaspartate + S-adenosyl-L-methionine = [protein]-L-isoaspartate alpha-methyl ester + S-adenosyl-L-homocysteine. Its function is as follows. Catalyzes the methyl esterification of L-isoaspartyl residues in peptides and proteins that result from spontaneous decomposition of normal L-aspartyl and L-asparaginyl residues. It plays a role in the repair and/or degradation of damaged proteins. The protein is Protein-L-isoaspartate O-methyltransferase of Sodalis glossinidius (strain morsitans).